A 138-amino-acid polypeptide reads, in one-letter code: MATRTQARGAVVELLYAFESGNEEIKKIASSMLEEKKIKNNQLAFALSLFNGVLERINEIDALIEPHLKDWDFKRLGSMEKAILRLGAYEIGFTPTQNPIIINECIELGKLYAEPNTPKFLNAILDSLSKKLAQKPLN.

Belongs to the NusB family.

Functionally, involved in transcription antitermination. Required for transcription of ribosomal RNA (rRNA) genes. Binds specifically to the boxA antiterminator sequence of the ribosomal RNA (rrn) operons. The polypeptide is Transcription antitermination protein NusB (Helicobacter pylori (strain G27)).